A 360-amino-acid polypeptide reads, in one-letter code: MKFYLVGGAVRDMLLGITPKDKDWVVVGATEDEMLANGFIKIAANFPVFIHPQTKQEYALARSEKKTASGYHGFEVNFSKYITLEDDLKRRDLTINSIAIDQNNKVIDPFNGQADLQNRILRHTSIAFIEDPLRVVRLARFKAQLSNFNFSIAQEMLALIKELVKTGELNHLTRERLHIEFVKALNNPKIFFTTLKELEALKIIFPNISCFLPLIPNKSFFENPIYKGSNINEKITLCLLKIPQQQLDDIRKEFLLTNKHYKLLKASIAISKILEDRSITAEEIFQLIKNANIIRDKNLFAESLNLYKKYLKICDTITPHRNYQLLQTTINTIKNASIDSLTIKTIPKDKLRNTLKQLKL.

ATP is bound by residues G8 and R11. CTP contacts are provided by G8 and R11. Mg(2+) contacts are provided by D21 and D23. The ATP site is built by R91, R137, and R140. 3 residues coordinate CTP: R91, R137, and R140.

This sequence belongs to the tRNA nucleotidyltransferase/poly(A) polymerase family. Bacterial CCA-adding enzyme type 2 subfamily. It depends on Mg(2+) as a cofactor.

It catalyses the reaction a tRNA precursor + 2 CTP + ATP = a tRNA with a 3' CCA end + 3 diphosphate. It carries out the reaction a tRNA with a 3' CCA end + 2 CTP + ATP = a tRNA with a 3' CCACCA end + 3 diphosphate. In terms of biological role, catalyzes the addition and repair of the essential 3'-terminal CCA sequence in tRNAs without using a nucleic acid template. Adds these three nucleotides in the order of C, C, and A to the tRNA nucleotide-73, using CTP and ATP as substrates and producing inorganic pyrophosphate. tRNA 3'-terminal CCA addition is required both for tRNA processing and repair. Also involved in tRNA surveillance by mediating tandem CCA addition to generate a CCACCA at the 3' terminus of unstable tRNAs. While stable tRNAs receive only 3'-terminal CCA, unstable tRNAs are marked with CCACCA and rapidly degraded. This chain is CCA-adding enzyme, found in Francisella tularensis subsp. tularensis (strain FSC 198).